Reading from the N-terminus, the 348-residue chain is GMP reductase (348 aa).

Residue alanine 108 to alanine 131 coordinates NADP(+). K(+) contacts are provided by glycine 181 and glycine 183. The active-site Thioimidate intermediate is cysteine 186. Residue isoleucine 216 to valine 239 participates in NADP(+) binding.

It belongs to the IMPDH/GMPR family. GuaC type 1 subfamily. In terms of assembly, homotetramer.

It catalyses the reaction IMP + NH4(+) + NADP(+) = GMP + NADPH + 2 H(+). In terms of biological role, catalyzes the irreversible NADPH-dependent deamination of GMP to IMP. It functions in the conversion of nucleobase, nucleoside and nucleotide derivatives of G to A nucleotides, and in maintaining the intracellular balance of A and G nucleotides. The chain is GMP reductase from Vibrio vulnificus (strain CMCP6).